The sequence spans 426 residues: Vacuole membrane protein hfl11 (426 aa).

A run of 5 helical transmembrane segments spans residues 39–59 (SVVRILMMIVIYSSVSFLSVY), 73–93 (IYEAFALYCFFCLLIDYLGGE), 133–153 (GILQYTWLKPFLVIAVLLTKV), 172–192 (IGLVYNISITLSLYSLTTFWV), and 223–243 (VLSITNWLGLLNGTGWIYSLL). Ser-364 bears the Phosphoserine mark. Residues 386 to 409 (LQFEIDDEMEPLYNQAKQMRYGDY) are ATG8-interacting region.

The protein belongs to the TMEM184 family. Interacts with atg8.

It is found in the vacuole membrane. Functionally, vacuole membrane protein that recruits ATG8 to facilitate the degradation of vacuolar integral membrane proteins during early-stationary vacuole turnover (EVT) when cells enter stationary phase. This is Vacuole membrane protein hfl11 from Schizosaccharomyces pombe (strain 972 / ATCC 24843) (Fission yeast).